Consider the following 618-residue polypeptide: Transport protein particle subunit trs85-2 (618 aa).

The protein belongs to the TRS85 family. As to quaternary structure, part of the multisubunit TRAPP (transport protein particle) complexes I and II.

It is found in the golgi apparatus. It localises to the cis-Golgi network. Functionally, component of the TRAPP I and TRAPP II complexes. TRAPP I plays a key role in the late stages of endoplasmic reticulum to Golgi traffic. TRAPP II seems to play a role in intra-Golgi transport. Has a role late in meiosis following DNA replication. The protein is Transport protein particle subunit trs85-2 (trs85-2) of Schizosaccharomyces pombe (strain 972 / ATCC 24843) (Fission yeast).